We begin with the raw amino-acid sequence, 360 residues long: Phospho-N-acetylmuramoyl-pentapeptide-transferase (360 aa).

The Periplasmic segment spans residues 1-25 (MLVWLAEHLVKYYSGFNVFSYLTFR). A helical transmembrane segment spans residues 26 to 46 (AIVSLLTALFISLWMGPRMIA). Over 47 to 71 (HLQKLSFGQVVRNDGPESHFSKRGT) the chain is Cytoplasmic. A helical membrane pass occupies residues 72 to 92 (PTMGGIMILTAIVISVLLWAY). A topological domain (periplasmic) is located at residue P93. Residues 94-114 (SNPYVWCVLVVLVGYGVIGFV) form a helical membrane-spanning segment. Residues 115 to 131 (DDYRKVVRKDTKGLIAR) are Cytoplasmic-facing. The chain crosses the membrane as a helical span at residues 132-152 (WKYFWMSVIALGVAFALYLAG). The Periplasmic portion of the chain corresponds to 153 to 167 (KDTPATQLVVPFFKD). The helical transmembrane segment at 168–188 (VMPQLGLFYILLAYFVIVGTG) threads the bilayer. The Cytoplasmic segment spans residues 189–198 (NAVNLTDGLD). Residues 199-219 (GLAIMPTVFVAGGFALVAWAT) traverse the membrane as a helical segment. Topologically, residues 220–235 (GNMNFASYLHIPYLRH) are periplasmic. The chain crosses the membrane as a helical span at residues 236-256 (AGELVIVCTAIVGAGLGFLWF). At 257–262 (NTYPAQ) the chain is on the cytoplasmic side. A helical membrane pass occupies residues 263–283 (VFMGDVGSLALGGALGIIAVL). Over 284–287 (LRQE) the chain is Periplasmic. Residues 288–308 (FLLVIMGGVFVVETLSVILQV) traverse the membrane as a helical segment. Residues 309 to 337 (GSFKLRGQRIFRMAPIHHHYELKGWPEPR) are Cytoplasmic-facing. A helical membrane pass occupies residues 338–358 (VIVRFWIISLMLVLIGLATLK). The Periplasmic segment spans residues 359–360 (VR).

The protein belongs to the glycosyltransferase 4 family. MraY subfamily. Mg(2+) serves as cofactor.

It is found in the cell inner membrane. The catalysed reaction is UDP-N-acetyl-alpha-D-muramoyl-L-alanyl-gamma-D-glutamyl-meso-2,6-diaminopimeloyl-D-alanyl-D-alanine + di-trans,octa-cis-undecaprenyl phosphate = di-trans,octa-cis-undecaprenyl diphospho-N-acetyl-alpha-D-muramoyl-L-alanyl-D-glutamyl-meso-2,6-diaminopimeloyl-D-alanyl-D-alanine + UMP. The protein operates within cell wall biogenesis; peptidoglycan biosynthesis. In terms of biological role, catalyzes the initial step of the lipid cycle reactions in the biosynthesis of the cell wall peptidoglycan: transfers peptidoglycan precursor phospho-MurNAc-pentapeptide from UDP-MurNAc-pentapeptide onto the lipid carrier undecaprenyl phosphate, yielding undecaprenyl-pyrophosphoryl-MurNAc-pentapeptide, known as lipid I. The protein is Phospho-N-acetylmuramoyl-pentapeptide-transferase of Shigella boydii serotype 18 (strain CDC 3083-94 / BS512).